Reading from the N-terminus, the 85-residue chain is Putative N.vectensis toxin 1 9 (85 aa).

The first 20 residues, 1–20 (MASFKIVIVCLALLVAVASA), serve as a signal peptide directing secretion. Positions 21-36 (RRRDMMSDDELDYHFS) are excised as a propeptide. 3 cysteine pairs are disulfide-bonded: C42/C82, C44/C72, and C65/C83.

This sequence belongs to the sea anemone sodium channel inhibitory toxin family. Type II subfamily. Expressed in ectodermal glands and in clumps outside of the extodermal layer. Is not expressed in nematocytes. In adult female tissues, shows similar expression levels in mesenteries (gametes-producing tissue), tentacles, pharynx and physa.

It is found in the secreted. Functionally, binds to site 3 of voltage-gated sodium channels and inhibits the inactivation process. Is highly active on DmNav1/TipE (drosophila) and is only extremely weakly active on rat Nav1.4-beta-1/SCN4A-SCN1B, and on human Nav1.5-beta-1/SCN5A-beta-1. This reveals high specificity for arthropod over mammalian channels. In vivo, when released into the medium, this recombinant toxin induces impaired swimming, paralysis and death of the crustacean A.nauplii within several hours. Also causes paralysis of cherry shrimps immediately after injection at very low doses. Its effect on zebrafish (D.rerio) larvae is also rapid, since it induces tail twitching accompanied by impaired swimming after 20 minutes and complete paralysis within 45 minutes. It has also been observed to cause death of zebrafish larvae within 1 hour. This is Putative N.vectensis toxin 1 9 from Nematostella vectensis (Starlet sea anemone).